The chain runs to 664 residues: Two-component response regulator ARR2 (664 aa).

The segment at 1-21 (MVNPGHGRGPDSGTAAGGSNS) is disordered. In terms of domain architecture, Response regulatory spans 29–144 (RVLVVDDDPT…ALKNIWQHVV (116 aa)). D80 is modified (4-aspartylphosphate). The tract at residues 151–215 (WNVSEHSGGS…DDKEDSSSLK (65 aa)) is disordered. The span at 165–178 (GGDRDRQQQHREDA) shows a compositional bias: basic and acidic residues. The span at 180 to 191 (NNSSSVNEGNGR) shows a compositional bias: polar residues. Residues 200-209 (EVDDQGDDKE) show a composition bias toward acidic residues. The Nuclear localization signal signature appears at 215–218 (KKPR). Residues 218 to 268 (RVVWSVELHQQFVAAVNQLGVDKAVPKKILEMMNVPGLTRENVASHLQKYR) constitute a DNA-binding region (myb-like GARP). Low complexity predominate over residues 554 to 567 (AAFSTSEAYSSSST). Residues 554-589 (AAFSTSEAYSSSSTQRKRRETDATVVGEHGQNLQSP) form a disordered region.

It belongs to the ARR family. Type-B subfamily. As to quaternary structure, binds the target DNA as a monomer. Interacts with histidine-containing phosphotransfer proteins. Two-component system major event consists of a His-to-Asp phosphorelay between a sensor histidine kinase (HK) and a response regulator (RR). In plants, the His-to-Asp phosphorelay involves an additional intermediate named Histidine-containing phosphotransfer protein (HPt). This multistep phosphorelay consists of a His-Asp-His-Asp sequential transfer of a phosphate group between first a His and an Asp of the HK protein, followed by the transfer to a conserved His of the HPt protein and finally the transfer to an Asp in the receiver domain of the RR protein. Phosphorylated in response to cytokinin mediated by AHK3. Detected in the whole plant. Predominantly expressed in pollen.

Its subcellular location is the nucleus. Functionally, transcriptional activator that binds specifically to the DNA sequence 5'-[AG]GATT-3'. Functions as a response regulator involved in His-to-Asp phosphorelay signal transduction system. Phosphorylation of the Asp residue in the receiver domain activates the ability of the protein to promote the transcription of target genes. Could directly activate some type-A response regulators in response to cytokinins. Involved in the expression of nuclear genes for components of mitochondrial complex I. Promotes cytokinin-mediated leaf longevity. Involved in the ethylene signaling pathway in an ETR1-dependent manner and in the cytokinin signaling pathway. This chain is Two-component response regulator ARR2 (ARR2), found in Arabidopsis thaliana (Mouse-ear cress).